A 322-amino-acid polypeptide reads, in one-letter code: Lipoyl synthase 2 (322 aa).

The disordered stretch occupies residues 1–36; the sequence is MKVILDLLNNDPRTTQRTERPRHPEKANRPDTPMES. Positions 14 to 34 are enriched in basic and acidic residues; sequence TTQRTERPRHPEKANRPDTPM. 7 residues coordinate [4Fe-4S] cluster: C67, C72, C78, C93, C97, C100, and S306. The 217-residue stretch at 79-295 folds into the Radical SAM core domain; that stretch reads WAKKHATFMI…EKTAYAKGFL (217 aa).

The protein belongs to the radical SAM superfamily. Lipoyl synthase family. The cofactor is [4Fe-4S] cluster.

It is found in the cytoplasm. The enzyme catalyses [[Fe-S] cluster scaffold protein carrying a second [4Fe-4S](2+) cluster] + N(6)-octanoyl-L-lysyl-[protein] + 2 oxidized [2Fe-2S]-[ferredoxin] + 2 S-adenosyl-L-methionine + 4 H(+) = [[Fe-S] cluster scaffold protein] + N(6)-[(R)-dihydrolipoyl]-L-lysyl-[protein] + 4 Fe(3+) + 2 hydrogen sulfide + 2 5'-deoxyadenosine + 2 L-methionine + 2 reduced [2Fe-2S]-[ferredoxin]. It functions in the pathway protein modification; protein lipoylation via endogenous pathway; protein N(6)-(lipoyl)lysine from octanoyl-[acyl-carrier-protein]: step 2/2. Its function is as follows. Catalyzes the radical-mediated insertion of two sulfur atoms into the C-6 and C-8 positions of the octanoyl moiety bound to the lipoyl domains of lipoate-dependent enzymes, thereby converting the octanoylated domains into lipoylated derivatives. In Bradyrhizobium diazoefficiens (strain JCM 10833 / BCRC 13528 / IAM 13628 / NBRC 14792 / USDA 110), this protein is Lipoyl synthase 2.